A 425-amino-acid chain; its full sequence is UPF0597 protein Swoo_4889 (425 aa).

Belongs to the UPF0597 family.

The sequence is that of UPF0597 protein Swoo_4889 from Shewanella woodyi (strain ATCC 51908 / MS32).